The primary structure comprises 264 residues: Thymidylate synthase (264 aa).

DUMP is bound at residue Arg21. His51 lines the (6R)-5,10-methylene-5,6,7,8-tetrahydrofolate pocket. 126–127 (RR) serves as a coordination point for dUMP. Residue Cys146 is the Nucleophile of the active site. Residues 166–169 (RSAD), Asn177, and 207–209 (HLY) each bind dUMP. Residue Asp169 participates in (6R)-5,10-methylene-5,6,7,8-tetrahydrofolate binding. Residue Ala263 coordinates (6R)-5,10-methylene-5,6,7,8-tetrahydrofolate.

Belongs to the thymidylate synthase family. Bacterial-type ThyA subfamily. As to quaternary structure, homodimer.

The protein resides in the cytoplasm. It carries out the reaction dUMP + (6R)-5,10-methylene-5,6,7,8-tetrahydrofolate = 7,8-dihydrofolate + dTMP. The protein operates within pyrimidine metabolism; dTTP biosynthesis. Catalyzes the reductive methylation of 2'-deoxyuridine-5'-monophosphate (dUMP) to 2'-deoxythymidine-5'-monophosphate (dTMP) while utilizing 5,10-methylenetetrahydrofolate (mTHF) as the methyl donor and reductant in the reaction, yielding dihydrofolate (DHF) as a by-product. This enzymatic reaction provides an intracellular de novo source of dTMP, an essential precursor for DNA biosynthesis. This Legionella pneumophila subsp. pneumophila (strain Philadelphia 1 / ATCC 33152 / DSM 7513) protein is Thymidylate synthase.